Here is a 227-residue protein sequence, read N- to C-terminus: Small ribosomal subunit protein uS3 (227 aa).

The KH type-2 domain occupies 39–107; that stretch reads VREFLMKKLE…PVHINIEEIR (69 aa).

Belongs to the universal ribosomal protein uS3 family. In terms of assembly, part of the 30S ribosomal subunit. Forms a tight complex with proteins S10 and S14.

In terms of biological role, binds the lower part of the 30S subunit head. Binds mRNA in the 70S ribosome, positioning it for translation. In Hahella chejuensis (strain KCTC 2396), this protein is Small ribosomal subunit protein uS3.